Reading from the N-terminus, the 372-residue chain is Aminomethyltransferase (372 aa).

It belongs to the GcvT family. In terms of assembly, the glycine cleavage system is composed of four proteins: P, T, L and H.

It carries out the reaction N(6)-[(R)-S(8)-aminomethyldihydrolipoyl]-L-lysyl-[protein] + (6S)-5,6,7,8-tetrahydrofolate = N(6)-[(R)-dihydrolipoyl]-L-lysyl-[protein] + (6R)-5,10-methylene-5,6,7,8-tetrahydrofolate + NH4(+). Its function is as follows. The glycine cleavage system catalyzes the degradation of glycine. The sequence is that of Aminomethyltransferase from Paraburkholderia phymatum (strain DSM 17167 / CIP 108236 / LMG 21445 / STM815) (Burkholderia phymatum).